Reading from the N-terminus, the 140-residue chain is Large ribosomal subunit protein uL16 (140 aa).

This sequence belongs to the universal ribosomal protein uL16 family. As to quaternary structure, part of the 50S ribosomal subunit.

In terms of biological role, binds 23S rRNA and is also seen to make contacts with the A and possibly P site tRNAs. The polypeptide is Large ribosomal subunit protein uL16 (Trichlorobacter lovleyi (strain ATCC BAA-1151 / DSM 17278 / SZ) (Geobacter lovleyi)).